We begin with the raw amino-acid sequence, 171 residues long: MAEKRNIFLVGPMGAGKSTIGRHLAQMLHLEFHDSDQEIESRTGADIAWVFDVEGEEGFRIRETQVVADLTEKQGIVLATGGGSIQSKEIRNNLSARGIVVYLETTIDKQVARTQRDKRRPLLQVEDPREVLENLAATRNPLYEEIADVIVKTDEQSAKVVANQIIEQLGF.

14 to 19 (GAGKST) lines the ATP pocket. Position 18 (Ser18) interacts with Mg(2+). Substrate is bound by residues Asp36, Arg60, and Gly82. Arg120 provides a ligand contact to ATP. Arg139 contacts substrate. Gln156 provides a ligand contact to ATP.

Belongs to the shikimate kinase family. Monomer. The cofactor is Mg(2+).

It localises to the cytoplasm. It carries out the reaction shikimate + ATP = 3-phosphoshikimate + ADP + H(+). It functions in the pathway metabolic intermediate biosynthesis; chorismate biosynthesis; chorismate from D-erythrose 4-phosphate and phosphoenolpyruvate: step 5/7. Its function is as follows. Catalyzes the specific phosphorylation of the 3-hydroxyl group of shikimic acid using ATP as a cosubstrate. The sequence is that of Shikimate kinase from Shewanella woodyi (strain ATCC 51908 / MS32).